We begin with the raw amino-acid sequence, 628 residues long: Leucine-rich repeat and fibronectin type-III domain-containing protein 3 (628 aa).

Positions 1 to 16 (MAVLPLLLCLLPLAPA) are cleaved as a signal peptide. The Extracellular portion of the chain corresponds to 17–540 (SSPSQPATPS…APHAPFLGGT (524 aa)). The LRRNT domain maps to 19–59 (PSQPATPSPCPRRCRCQTQSLPLSVLCPGAGLLFVPPSLDR). LRR repeat units follow at residues 84–105 (GLLH…AFAD), 108–129 (ALRA…QLRG), 132–153 (NLRH…ALDD), 157–178 (TLED…ALGR), 181–202 (NVNT…AFSR), and 205–226 (KLAR…PLFS). The region spanning 249–295 (NPLHCNCELVWLRRLAREDDLEACASPPALGGRYFWAVGEEEFVCEP) is the LRRCT domain. The Ig-like domain maps to 295–382 (PPVVTHRSPP…GEATAAVELT (88 aa)). C317 and C366 are joined by a disulfide. 2 N-linked (GlcNAc...) asparagine glycosylation sites follow: N348 and N393. A disordered region spans residues 380–432 (ELTVGPPPPPQLANSTSCDPPRDGDPDALTPPSAASASAAAKAADTGPPTDRG). Residues 406-429 (DALTPPSAASASAAAKAADTGPPT) are compositionally biased toward low complexity. The Fibronectin type-III domain maps to 427 to 525 (PPTDRGVQVT…GCARFSTEPA (99 aa)). The chain crosses the membrane as a helical span at residues 541-561 (MIIALGGVIVASVLVFIFVLL). Topologically, residues 562–628 (MRYKVHGGQP…WRPSHEPTGP (67 aa)) are cytoplasmic. The interval 587–628 (QTNGSLGPTPAPPAPEPAAPRAHTVVQLDCEPWRPSHEPTGP) is disordered. The span at 595–604 (TPAPPAPEPA) shows a compositional bias: pro residues. The segment covering 617–628 (EPWRPSHEPTGP) has biased composition (basic and acidic residues).

Belongs to the LRFN family. Can form heteromeric complexes with LRFN1, LRFN2, LRFN4 and LRFN5. Able to form homomeric complexes across cell junctions, between adjacent cells. Does not interact with DLG4. N-glycosylated.

Its subcellular location is the cell membrane. It localises to the cell projection. The protein resides in the axon. It is found in the dendrite. The protein localises to the synapse. Its subcellular location is the presynaptic cell membrane. It localises to the postsynaptic cell membrane. In terms of biological role, cell adhesion molecule that mediates homophilic cell-cell adhesion in a Ca(2+)-independent manner. Promotes neurite outgrowth in hippocampal neurons. This chain is Leucine-rich repeat and fibronectin type-III domain-containing protein 3 (LRFN3), found in Ailuropoda melanoleuca (Giant panda).